We begin with the raw amino-acid sequence, 407 residues long: 1-deoxy-D-xylulose 5-phosphate reductoisomerase (407 aa).

Thr-25, Gly-26, Ser-27, Ile-28, Asn-53, and Asn-136 together coordinate NADPH. 1-deoxy-D-xylulose 5-phosphate is bound at residue Lys-137. Glu-138 contributes to the NADPH binding site. Asp-162 contacts Mn(2+). 1-deoxy-D-xylulose 5-phosphate-binding residues include Ser-163, Glu-164, Ser-188, and His-211. Glu-164 serves as a coordination point for Mn(2+). Gly-217 is a binding site for NADPH. Ser-224, Asn-229, Lys-230, and Glu-233 together coordinate 1-deoxy-D-xylulose 5-phosphate. Position 233 (Glu-233) interacts with Mn(2+).

It belongs to the DXR family. Mg(2+) serves as cofactor. It depends on Mn(2+) as a cofactor.

It catalyses the reaction 2-C-methyl-D-erythritol 4-phosphate + NADP(+) = 1-deoxy-D-xylulose 5-phosphate + NADPH + H(+). The protein operates within isoprenoid biosynthesis; isopentenyl diphosphate biosynthesis via DXP pathway; isopentenyl diphosphate from 1-deoxy-D-xylulose 5-phosphate: step 1/6. Its function is as follows. Catalyzes the NADPH-dependent rearrangement and reduction of 1-deoxy-D-xylulose-5-phosphate (DXP) to 2-C-methyl-D-erythritol 4-phosphate (MEP). This is 1-deoxy-D-xylulose 5-phosphate reductoisomerase from Nitrobacter winogradskyi (strain ATCC 25391 / DSM 10237 / CIP 104748 / NCIMB 11846 / Nb-255).